Reading from the N-terminus, the 642-residue chain is MAAAAAATAAAAASIRERQTVALKRMLNFNVPHIKNSTGEPVWKVLIYDRFGQDIISPLLSVKELRDMGITLHLLLHSDRDPIPDVPAVYFVMPTEENIDRMCQDLRNQLYESYYLNFISAISRSKLEDIANAALAASAVTQVAKVFDQYLNFITLEDDMFVLCNQNKELVSYRAINRPDITDTEMETVMDTIVDSLFCFFVTLGAVPIIRCSRGTAAEMVAVKLDKKLRENLRDARNSLFTGDTLGAGQFSFQRPLLVLVDRNIDLATPLHHTWTYQALVHDVLDFHLNRVNLEESSGVENSPAGARPKRKNKKSYDLTPVDKFWQKHKGSPFPEVAESVQQELESYRAQEDEVKRLKSIMGLEGEDEGAISMLSDNTAKLTSAVSSLPELLEKKRLIDLHTNVATAVLEHIKARKLDVYFEYEEKIMSKTTLDKSLLDIISDPDAGTPEDKMRLFLIYYISTQQAPSEADLEQYKKALTDAGCNLNPLQYIKQWKAFTKMASAPASYGSTTTKPMGLLSRVMNTGSQFVMEGVKNLVLKQQNLPVTRILDNLMEMKSNPETDDYRYFDPKMLRGNDSSVPRNKNPFQEAIVFVVGGGNYIEYQNLVDYIKGKQGKHILYGCSELFNATQFIKQLSQLGQK.

Ala2 carries the post-translational modification N-acetylalanine. 3 positions are modified to phosphoserine: Ser37, Ser303, and Ser528.

The protein belongs to the STXBP/unc-18/SEC1 family. In terms of assembly, interacts with STX17. Interacts with STX5A. Interacts with the COG complex via COG4.

Its subcellular location is the cytoplasm. The protein localises to the endoplasmic reticulum membrane. It is found in the golgi apparatus. It localises to the golgi stack membrane. Its function is as follows. Plays a role in SNARE-pin assembly and Golgi-to-ER retrograde transport via its interaction with COG4. Involved in vesicular transport between the endoplasmic reticulum and the Golgi. This is Sec1 family domain-containing protein 1 (SCFD1) from Homo sapiens (Human).